We begin with the raw amino-acid sequence, 600 residues long: DDB1- and CUL4-associated factor 15 (600 aa).

The tract at residues methionine 1–valine 29 is disordered. Over residues glycine 14 to arginine 27 the composition is skewed to gly residues. Position 50 is a phosphoserine (serine 50). Cysteine 193, cysteine 196, cysteine 211, and histidine 214 together coordinate Zn(2+). Residue serine 314 is modified to Phosphoserine. The segment covering alanine 334 to arginine 343 has biased composition (basic and acidic residues). A disordered region spans residues alanine 334–proline 384. Composition is skewed to low complexity over residues leucine 344–leucine 359 and proline 374–proline 384.

Component of the DCX(DCAF15) complex, also named CLR4(DCAF15) complex, composed of DCAF15, DDB1, cullin-4 (CUL4A or CUL4B), DDA1 and RBX1.

It participates in protein modification; protein ubiquitination. Functionally, substrate-recognition component of the DCX(DCAF15) complex, a cullin-4-RING E3 ubiquitin-protein ligase complex that mediates ubiquitination and degradation of target proteins. The DCX(DCAF15) complex acts as a regulator of the natural killer (NK) cells effector functions, possibly by mediating ubiquitination and degradation of cohesin subunits SMC1A and SMC3. May play a role in the activation of antigen-presenting cells (APC) and their interaction with NK cells. The chain is DDB1- and CUL4-associated factor 15 from Mus musculus (Mouse).